The following is a 427-amino-acid chain: Anaerobic glycerol-3-phosphate dehydrogenase subunit B (427 aa).

The protein belongs to the anaerobic G-3-P dehydrogenase subunit B family. Composed of a catalytic GlpA/B dimer and of membrane bound GlpC. Requires FMN as cofactor.

The catalysed reaction is a quinone + sn-glycerol 3-phosphate = dihydroxyacetone phosphate + a quinol. It functions in the pathway polyol metabolism; glycerol degradation via glycerol kinase pathway; glycerone phosphate from sn-glycerol 3-phosphate (anaerobic route): step 1/1. Its function is as follows. Conversion of glycerol 3-phosphate to dihydroxyacetone. Uses fumarate or nitrate as electron acceptor. The polypeptide is Anaerobic glycerol-3-phosphate dehydrogenase subunit B (Glaesserella parasuis serovar 5 (strain SH0165) (Haemophilus parasuis)).